The following is a 216-amino-acid chain: Probable methylthioribulose-1-phosphate dehydratase (216 aa).

Residue Cys87 coordinates substrate. His105 and His107 together coordinate Zn(2+). Glu129 (proton donor/acceptor) is an active-site residue.

Belongs to the aldolase class II family. MtnB subfamily. Zn(2+) is required as a cofactor.

The protein localises to the cytoplasm. The enzyme catalyses 5-(methylsulfanyl)-D-ribulose 1-phosphate = 5-methylsulfanyl-2,3-dioxopentyl phosphate + H2O. It functions in the pathway amino-acid biosynthesis; L-methionine biosynthesis via salvage pathway; L-methionine from S-methyl-5-thio-alpha-D-ribose 1-phosphate: step 2/6. Catalyzes the dehydration of methylthioribulose-1-phosphate (MTRu-1-P) into 2,3-diketo-5-methylthiopentyl-1-phosphate (DK-MTP-1-P). This is Probable methylthioribulose-1-phosphate dehydratase from Drosophila persimilis (Fruit fly).